The primary structure comprises 279 residues: Pantothenate synthetase (279 aa).

Position 26–33 (26–33) interacts with ATP; that stretch reads MGGLHEGH. The active-site Proton donor is the His33. Gln57 provides a ligand contact to (R)-pantoate. Position 57 (Gln57) interacts with beta-alanine. 143 to 146 lines the ATP pocket; that stretch reads GKKD. Residue Gln149 coordinates (R)-pantoate. ATP contacts are provided by residues Val172 and 180–183; that span reads LSSR.

This sequence belongs to the pantothenate synthetase family. In terms of assembly, homodimer.

Its subcellular location is the cytoplasm. It catalyses the reaction (R)-pantoate + beta-alanine + ATP = (R)-pantothenate + AMP + diphosphate + H(+). It functions in the pathway cofactor biosynthesis; (R)-pantothenate biosynthesis; (R)-pantothenate from (R)-pantoate and beta-alanine: step 1/1. Catalyzes the condensation of pantoate with beta-alanine in an ATP-dependent reaction via a pantoyl-adenylate intermediate. The protein is Pantothenate synthetase of Nitrosospira multiformis (strain ATCC 25196 / NCIMB 11849 / C 71).